The chain runs to 583 residues: Sensor protein SrrB (583 aa).

Residues M1 to K11 lie on the Cytoplasmic side of the membrane. The helical transmembrane segment at L12 to I32 threads the bilayer. The Extracellular segment spans residues T33 to T174. Residues I175–L195 form a helical membrane-spanning segment. The Cytoplasmic segment spans residues S196–E583. The HAMP domain occupies S197 to D249. The Histidine kinase domain occupies N366–E583. Residue H369 is modified to Phosphohistidine; by autocatalysis.

It is found in the cell membrane. The enzyme catalyses ATP + protein L-histidine = ADP + protein N-phospho-L-histidine.. Functionally, member of the two-component regulatory system SrrA/SrrB, which is involved in the global regulation of staphylococcal virulence factors in response to environmental oxygen levels as well as biofilm formation. Also plays an essential role in host-derived nitric oxide resistance by regulating hmp/flavohemoglobin, an enzyme that detoxifies nitric oxide by converting it to nitrate. Functions as a sensor protein kinase which is autophosphorylated at a histidine residue and transfers its phosphate group to SrrA. In turn, SrrA binds to the upstream promoter regions of the target genes to positively and negatively regulate their expression. In Staphylococcus aureus (strain MRSA252), this protein is Sensor protein SrrB (srrB).